Consider the following 474-residue polypeptide: Trigger factor (474 aa).

The 88-residue stretch at 171–258 folds into the PPIase FKBP-type domain; that stretch reads GDVAVIDFQG…LKELKTRDLP (88 aa). The tract at residues 441-474 is disordered; the sequence is TEVDAASATVETTATETAEEAPEAPKAKKGKKKA. A compositionally biased stretch (low complexity) spans 444–456; sequence DAASATVETTATE.

The protein belongs to the FKBP-type PPIase family. Tig subfamily.

It localises to the cytoplasm. The catalysed reaction is [protein]-peptidylproline (omega=180) = [protein]-peptidylproline (omega=0). Functionally, involved in protein export. Acts as a chaperone by maintaining the newly synthesized protein in an open conformation. Functions as a peptidyl-prolyl cis-trans isomerase. This Synechococcus elongatus (strain ATCC 33912 / PCC 7942 / FACHB-805) (Anacystis nidulans R2) protein is Trigger factor.